The primary structure comprises 306 residues: D-alanine--D-alanine ligase (306 aa).

The ATP-grasp domain occupies 107–300; the sequence is KEAYRAAGLP…FGQLCAWMVE (194 aa). ATP is bound at residue 134–184; the sequence is MQPPYVVKPYNEGSSVGVYIVTEAANGPPVLAPDLPATLMVEEYVPGRELS. The Mg(2+) site is built by Asp251, Glu267, and Asn269.

It belongs to the D-alanine--D-alanine ligase family. It depends on Mg(2+) as a cofactor. Requires Mn(2+) as cofactor.

It localises to the cytoplasm. The enzyme catalyses 2 D-alanine + ATP = D-alanyl-D-alanine + ADP + phosphate + H(+). Its pathway is cell wall biogenesis; peptidoglycan biosynthesis. Functionally, cell wall formation. The chain is D-alanine--D-alanine ligase from Ruegeria pomeroyi (strain ATCC 700808 / DSM 15171 / DSS-3) (Silicibacter pomeroyi).